An 862-amino-acid polypeptide reads, in one-letter code: Kinesin-like protein KIN-7J (862 aa).

The Kinesin motor domain occupies 9 to 331 (RIVVSVRLRP…LLFANCAKDV (323 aa)). Position 95–102 (95–102 (GQTSSGKT)) interacts with ATP. A coiled-coil region spans residues 340–415 (VMSDKALVKH…NFRKVASDGD (76 aa)). 2 stretches are compositionally biased toward basic and acidic residues: residues 475–499 (EEHE…KEVQ) and 518–531 (PEKK…KHSE). Disordered stretches follow at residues 475-532 (EEHE…HSES) and 596-643 (DDSA…STCN). Over residues 598 to 610 (SASTTPSSETFRY) the composition is skewed to polar residues. Residues 613 to 629 (RRPEKVRKSLSPDEIAD) are compositionally biased toward basic and acidic residues.

It belongs to the TRAFAC class myosin-kinesin ATPase superfamily. Kinesin family. KIN-7 subfamily.

The polypeptide is Kinesin-like protein KIN-7J (Oryza sativa subsp. japonica (Rice)).